Here is a 109-residue protein sequence, read N- to C-terminus: uncharacterized protein (109 aa).

The chain crosses the membrane as a helical span at residues 75–95; the sequence is LHFFFLFWLLNFILFFRIHLY.

It localises to the membrane. This is an uncharacterized protein from Schizosaccharomyces pombe (strain 972 / ATCC 24843) (Fission yeast).